The primary structure comprises 322 residues: MDTSSINAQSIFDDNAAMLKLSWLTGHEGWERGFSADTVANATSSADLVGHLNLIHPNRIQVLGEAEIDYYQRQTDEDRSRHMAELIALEPPFLVVAGGAAAPPELVLRCTRSSTPLFTTPMSAAAVIDSLRLYMSRILAPRATLHGVFLDILGMGVLLTGDSGLGKSELGLELISRGHGLVADDAVDFVRLGPDFVEGRCPPLLQNLLEVRGLGLLDIKTIFGETAVRRKMKLKLIVQLVRRPDGEFQRLPLESQTVDVLGLPISKVTIQVAAGRNLAVLVEAAVRNTILQLRGIDTLRDFMDRQRLAMQDPDSQFPGKLV.

Residues histidine 146 and lysine 167 contribute to the active site. Residue 161 to 168 participates in ATP binding; it reads GDSGLGKS. Residue serine 168 coordinates Mg(2+). Aspartate 185 serves as the catalytic Proton acceptor; for phosphorylation activity. Proton donor; for dephosphorylation activity. The segment at 209 to 218 is important for the catalytic mechanism of both phosphorylation and dephosphorylation; sequence LEVRGLGLLD. Mg(2+) is bound at residue glutamate 210. The active site involves arginine 250. The interval 271–276 is important for the catalytic mechanism of dephosphorylation; sequence QVAAGR.

Belongs to the HPrK/P family. As to quaternary structure, homohexamer. Mg(2+) is required as a cofactor.

It carries out the reaction [HPr protein]-L-serine + ATP = [HPr protein]-O-phospho-L-serine + ADP + H(+). The catalysed reaction is [HPr protein]-O-phospho-L-serine + phosphate + H(+) = [HPr protein]-L-serine + diphosphate. Functionally, catalyzes the ATP- as well as the pyrophosphate-dependent phosphorylation of a specific serine residue in HPr, a phosphocarrier protein of the phosphoenolpyruvate-dependent sugar phosphotransferase system (PTS). HprK/P also catalyzes the pyrophosphate-producing, inorganic phosphate-dependent dephosphorylation (phosphorolysis) of seryl-phosphorylated HPr (P-Ser-HPr). The protein is HPr kinase/phosphorylase of Burkholderia mallei (strain NCTC 10247).